Here is a 137-residue protein sequence, read N- to C-terminus: Acidic phospholipase A2 beta-bungarotoxin A chain (137 aa).

A signal peptide spans 1-9 (AVCVSLLGA). A propeptide spanning residues 10 to 17 (ANIPPHPL) is cleaved from the precursor. Disulfide bonds link cysteine 44–cysteine 136, cysteine 46–cysteine 62, cysteine 61–cysteine 117, cysteine 68–cysteine 110, cysteine 78–cysteine 103, and cysteine 96–cysteine 108. Ca(2+)-binding residues include tyrosine 45, glycine 47, and glycine 49. The active site involves histidine 65. A Ca(2+)-binding site is contributed by aspartate 66. The active site involves aspartate 111.

This sequence belongs to the phospholipase A2 family. Group I subfamily. D49 sub-subfamily. In terms of assembly, heterodimer; disulfide-linked. The A chain has phospholipase A2 activity and the B chain shows homology with the basic protease inhibitors. Ca(2+) serves as cofactor. As to expression, expressed by the venom gland.

It localises to the secreted. It catalyses the reaction a 1,2-diacyl-sn-glycero-3-phosphocholine + H2O = a 1-acyl-sn-glycero-3-phosphocholine + a fatty acid + H(+). In terms of biological role, beta bungarotoxin is a presynaptic neurotoxin. The A chain has phospholipase activity. PLA2 catalyzes the calcium-dependent hydrolysis of the 2-acyl groups in 3-sn-phosphoglycerides. This Bungarus candidus (Malayan krait) protein is Acidic phospholipase A2 beta-bungarotoxin A chain.